The chain runs to 96 residues: Co-chaperonin GroES (96 aa).

This sequence belongs to the GroES chaperonin family. Heptamer of 7 subunits arranged in a ring. Interacts with the chaperonin GroEL.

It localises to the cytoplasm. Together with the chaperonin GroEL, plays an essential role in assisting protein folding. The GroEL-GroES system forms a nano-cage that allows encapsulation of the non-native substrate proteins and provides a physical environment optimized to promote and accelerate protein folding. GroES binds to the apical surface of the GroEL ring, thereby capping the opening of the GroEL channel. This is Co-chaperonin GroES from Shewanella frigidimarina (strain NCIMB 400).